Reading from the N-terminus, the 814-residue chain is Outer membrane usher protein SefC (814 aa).

The N-terminal stretch at 1 to 30 is a signal peptide; that stretch reads MKKTTITLFVLTSVFHSGNVFSRQYNFDYG. Residues Cys-792 and Cys-813 are joined by a disulfide bond.

This sequence belongs to the fimbrial export usher family.

It is found in the cell outer membrane. Involved in the export and assembly of the SefA fimbrial subunit. The sequence is that of Outer membrane usher protein SefC (sefC) from Salmonella enteritidis.